The sequence spans 994 residues: Integrator complex subunit 5 (994 aa).

Residues 559–586 form a disordered region; the sequence is NSNNNNELCNGKDYGKRTKLEPGEDKVD. A compositionally biased stretch (basic and acidic residues) spans 571–583; sequence DYGKRTKLEPGED. 2 helical membrane passes run 769–786 and 810–826; these read YSLV…DVMY and AFIN…LIAG.

This sequence belongs to the Integrator subunit 5 family. In terms of assembly, belongs to the multiprotein complex Integrator, at least composed of IntS1, IntS2, IntS3, IntS4, omd/IntS5, IntS6, defl/IntS7, IntS8, IntS9, IntS10, IntS11, IntS12, asun/IntS13, IntS14 and IntS15. The core complex associates with protein phosphatase 2A subunits mts/PP2A and Pp2A-29B, to form the Integrator-PP2A (INTAC) complex.

It is found in the nucleus membrane. It localises to the nucleus. The protein localises to the cytoplasm. Component of the integrator complex, a multiprotein complex that terminates RNA polymerase II (Pol II) transcription in the promoter-proximal region of genes. The integrator complex provides a quality checkpoint during transcription elongation by driving premature transcription termination of transcripts that are unfavorably configured for transcriptional elongation: the complex terminates transcription by (1) catalyzing dephosphorylation of the C-terminal domain (CTD) of Pol II subunit Polr2A/Rbp1 and Spt5, and (2) degrading the exiting nascent RNA transcript via endonuclease activity. The integrator complex is also involved in the 3'-end processing of the U7 snRNA, and also the spliceosomal snRNAs U1, U2, U4 and U5. In Drosophila melanogaster (Fruit fly), this protein is Integrator complex subunit 5.